The sequence spans 155 residues: Deoxyuridine 5'-triphosphate nucleotidohydrolase (155 aa).

Residues 75–77 (RSG), Asn-88, and 92–94 (TVD) each bind substrate.

The protein belongs to the dUTPase family. It depends on Mg(2+) as a cofactor.

The enzyme catalyses dUTP + H2O = dUMP + diphosphate + H(+). Its pathway is pyrimidine metabolism; dUMP biosynthesis; dUMP from dCTP (dUTP route): step 2/2. This enzyme is involved in nucleotide metabolism: it produces dUMP, the immediate precursor of thymidine nucleotides and it decreases the intracellular concentration of dUTP so that uracil cannot be incorporated into DNA. The sequence is that of Deoxyuridine 5'-triphosphate nucleotidohydrolase from Caulobacter vibrioides (strain ATCC 19089 / CIP 103742 / CB 15) (Caulobacter crescentus).